A 423-amino-acid chain; its full sequence is Putative UPF0496 protein 5 (423 aa).

The segment covering 1–14 (MGNRHGIMRPRRLA) has biased composition (basic residues). Positions 1–37 (MGNRHGIMRPRRLASGRSAAEEEEDGEGEPGSYEAAC) are disordered. 2 helical membrane-spanning segments follow: residues 224-244 (IVFL…AAIA) and 247-267 (PVAA…GKWM).

Belongs to the UPF0496 family.

The protein localises to the membrane. The protein is Putative UPF0496 protein 5 of Oryza sativa subsp. japonica (Rice).